Reading from the N-terminus, the 611-residue chain is Dihydroxy-acid dehydratase (611 aa).

Mg(2+) is bound at residue aspartate 81. Cysteine 122 contacts [2Fe-2S] cluster. Residues aspartate 123 and lysine 124 each coordinate Mg(2+). Residue lysine 124 is modified to N6-carboxylysine. Residue cysteine 195 participates in [2Fe-2S] cluster binding. Glutamate 491 serves as a coordination point for Mg(2+). Serine 517 (proton acceptor) is an active-site residue.

This sequence belongs to the IlvD/Edd family. As to quaternary structure, homodimer. It depends on [2Fe-2S] cluster as a cofactor. Mg(2+) serves as cofactor.

The enzyme catalyses (2R)-2,3-dihydroxy-3-methylbutanoate = 3-methyl-2-oxobutanoate + H2O. It catalyses the reaction (2R,3R)-2,3-dihydroxy-3-methylpentanoate = (S)-3-methyl-2-oxopentanoate + H2O. It participates in amino-acid biosynthesis; L-isoleucine biosynthesis; L-isoleucine from 2-oxobutanoate: step 3/4. Its pathway is amino-acid biosynthesis; L-valine biosynthesis; L-valine from pyruvate: step 3/4. In terms of biological role, functions in the biosynthesis of branched-chain amino acids. Catalyzes the dehydration of (2R,3R)-2,3-dihydroxy-3-methylpentanoate (2,3-dihydroxy-3-methylvalerate) into 2-oxo-3-methylpentanoate (2-oxo-3-methylvalerate) and of (2R)-2,3-dihydroxy-3-methylbutanoate (2,3-dihydroxyisovalerate) into 2-oxo-3-methylbutanoate (2-oxoisovalerate), the penultimate precursor to L-isoleucine and L-valine, respectively. This is Dihydroxy-acid dehydratase from Histophilus somni (strain 129Pt) (Haemophilus somnus).